We begin with the raw amino-acid sequence, 62 residues long: Large ribosomal subunit protein bL28 (62 aa).

Belongs to the bacterial ribosomal protein bL28 family.

In Acetivibrio thermocellus (strain ATCC 27405 / DSM 1237 / JCM 9322 / NBRC 103400 / NCIMB 10682 / NRRL B-4536 / VPI 7372) (Clostridium thermocellum), this protein is Large ribosomal subunit protein bL28.